A 162-amino-acid chain; its full sequence is Nucleotide-binding protein A2cp1_0112 (162 aa).

Belongs to the YajQ family.

Nucleotide-binding protein. The sequence is that of Nucleotide-binding protein A2cp1_0112 from Anaeromyxobacter dehalogenans (strain 2CP-1 / ATCC BAA-258).